The following is a 628-amino-acid chain: ATP-dependent zinc metalloprotease FtsH (628 aa).

The Stromal portion of the chain corresponds to 1-7 (MKLSWKT). Residues 8–28 (LLLWSLPIFVIGFFFWQGFLG) traverse the membrane as a helical segment. At 29 to 118 (PTTTDVGSNI…AHPPKSTSAV (90 aa)) the chain is on the lumenal side. A helical transmembrane segment spans residues 119 to 139 (WGLLGNLLFPLLLVGGLAFLF). Topologically, residues 140-628 (RRSNNASGGP…PEKNYYISQF (489 aa)) are stromal. 213 to 220 (GPPGTGKT) provides a ligand contact to ATP. Histidine 434 provides a ligand contact to Zn(2+). Residue glutamate 435 is part of the active site. Residues histidine 438 and aspartate 512 each coordinate Zn(2+).

It in the central section; belongs to the AAA ATPase family. In the C-terminal section; belongs to the peptidase M41 family. In terms of assembly, homohexamer. It depends on Zn(2+) as a cofactor.

Its subcellular location is the plastid. The protein resides in the chloroplast thylakoid membrane. Acts as a processive, ATP-dependent zinc metallopeptidase. The sequence is that of ATP-dependent zinc metalloprotease FtsH from Pyropia yezoensis (Susabi-nori).